A 158-amino-acid chain; its full sequence is NAD(P)H-quinone oxidoreductase subunit J, chloroplastic (158 aa).

This sequence belongs to the complex I 30 kDa subunit family. As to quaternary structure, NDH is composed of at least 16 different subunits, 5 of which are encoded in the nucleus.

It localises to the plastid. The protein resides in the chloroplast thylakoid membrane. It catalyses the reaction a plastoquinone + NADH + (n+1) H(+)(in) = a plastoquinol + NAD(+) + n H(+)(out). It carries out the reaction a plastoquinone + NADPH + (n+1) H(+)(in) = a plastoquinol + NADP(+) + n H(+)(out). NDH shuttles electrons from NAD(P)H:plastoquinone, via FMN and iron-sulfur (Fe-S) centers, to quinones in the photosynthetic chain and possibly in a chloroplast respiratory chain. The immediate electron acceptor for the enzyme in this species is believed to be plastoquinone. Couples the redox reaction to proton translocation, and thus conserves the redox energy in a proton gradient. The protein is NAD(P)H-quinone oxidoreductase subunit J, chloroplastic of Nymphaea alba (White water-lily).